We begin with the raw amino-acid sequence, 126 residues long: Probable 4-amino-4-deoxy-L-arabinose-phosphoundecaprenol flippase subunit ArnF (126 aa).

Over 1-4 (MKGY) the chain is Cytoplasmic. Residues 5-25 (IWGLISVLLVTIAQLLLKWGV) traverse the membrane as a helical segment. Topologically, residues 26-49 (VNLPALNLGLHWFDIEWLWSHRHS) are periplasmic. A helical transmembrane segment spans residues 50–70 (LVAVMAGLAGYLLSMLCWLFT). At 71-79 (LKYLPLNKA) the chain is on the cytoplasmic side. The chain crosses the membrane as a helical span at residues 80-100 (YPLISLSYVFVYLMVALLPWF). The Periplasmic segment spans residues 101-102 (NE). The chain crosses the membrane as a helical span at residues 103–123 (TITLLKTAGVIFILYGVWLIS). The Cytoplasmic portion of the chain corresponds to 124-126 (RPE).

This sequence belongs to the ArnF family. Heterodimer of ArnE and ArnF.

The protein resides in the cell inner membrane. It functions in the pathway bacterial outer membrane biogenesis; lipopolysaccharide biosynthesis. Translocates 4-amino-4-deoxy-L-arabinose-phosphoundecaprenol (alpha-L-Ara4N-phosphoundecaprenol) from the cytoplasmic to the periplasmic side of the inner membrane. The chain is Probable 4-amino-4-deoxy-L-arabinose-phosphoundecaprenol flippase subunit ArnF from Photorhabdus laumondii subsp. laumondii (strain DSM 15139 / CIP 105565 / TT01) (Photorhabdus luminescens subsp. laumondii).